Here is a 261-residue protein sequence, read N- to C-terminus: 14-3-3-like protein B (261 aa).

Residues 237–261 (DIPEDGEDSQKANGTAKFGGGDDAE) form a disordered region.

This sequence belongs to the 14-3-3 family.

This chain is 14-3-3-like protein B, found in Vicia faba (Broad bean).